A 581-amino-acid chain; its full sequence is MAYEFDLEDFNDNLEPFGFNCPAKDHFIEKLEGLCKTFRKSGEDIVDDVVSVMSNLGQKSVDSGILAKLEENLEAQAQKTVHTPRSVKKPARGRVPLAEKSGFILSGDPDDIEKPSHHLTNSAIAKLEGHFLDFSPFPGSPANEKFLKRADPSHVVTTIRGKKYQDKGLKGSTKSDDTIRIISKTPSTLYGGDKSSMVIEAKAQRMADIAHRIQKSFEEIVDWGNPSIPSVDVVYTYGQVIHDETKDNEKFGEHSVALMINDEDGTMIRMDFSKMTEDITLFPGQIIAVRGTNETGEELQVDKIFQPAALPVNPVETDTTKEIWFACGPYTATDNCGYEHLCELLDKVVAEKPDILMLAGPFVDKKNTFLNKPTFNITYDNLLEDLLLKVKETLVGTKTQVIIQPNASRDLCVPPVFPSAPFQQNRKLDKIKKELIFVADPCIFRISGVEVAMTSSEPIQALSNTEFHRSANQENIDRVARLSSHLLTQQCMYPLEPTEVPASMGDLLDVCCIGSTPHIVFAPTKLAPSAKCVNGSVFINSSTLAKGPTGNYAKMSINLNAGELMPGETVADYAQIQILKI.

The protein belongs to the DNA polymerase alpha subunit B family. DNA polymerase alpha:primase is a four subunit enzyme complex, which is assembled throughout the cell cycle, and consists of the two DNA polymerase subunits A and B, and the DNA primase large and small subunits. Subunit B binds to subunit A.

It localises to the nucleus. Functionally, may play an essential role at the early stage of chromosomal DNA replication by coupling the polymerase alpha/primase complex to the cellular replication machinery. Required for the distribution of pie-1 in cell divsion. This Caenorhabditis elegans protein is DNA polymerase alpha subunit B (div-1).